The chain runs to 110 residues: UPF0122 protein STER_0914 (110 aa).

This sequence belongs to the UPF0122 family.

In terms of biological role, might take part in the signal recognition particle (SRP) pathway. This is inferred from the conservation of its genetic proximity to ftsY/ffh. May be a regulatory protein. The chain is UPF0122 protein STER_0914 from Streptococcus thermophilus (strain ATCC BAA-491 / LMD-9).